A 116-amino-acid chain; its full sequence is Large ribosomal subunit protein uL18 (116 aa).

It belongs to the universal ribosomal protein uL18 family. Part of the 50S ribosomal subunit; part of the 5S rRNA/L5/L18/L25 subcomplex. Contacts the 5S and 23S rRNAs.

This is one of the proteins that bind and probably mediate the attachment of the 5S RNA into the large ribosomal subunit, where it forms part of the central protuberance. This Shewanella baltica (strain OS223) protein is Large ribosomal subunit protein uL18.